The chain runs to 150 residues: Ribonuclease H (150 aa).

Residues 1–141 (MKSIEVHTDG…VDVLARNQAI (141 aa)) enclose the RNase H type-1 domain. The Mg(2+) site is built by D9, E47, D69, and D133.

Belongs to the RNase H family. As to quaternary structure, monomer. Requires Mg(2+) as cofactor.

It localises to the cytoplasm. The enzyme catalyses Endonucleolytic cleavage to 5'-phosphomonoester.. In terms of biological role, endonuclease that specifically degrades the RNA of RNA-DNA hybrids. The sequence is that of Ribonuclease H from Xanthomonas axonopodis pv. citri (strain 306).